A 1309-amino-acid chain; its full sequence is Lysine-specific demethylase 2B (1309 aa).

Residue Ser26 is modified to Phosphoserine. In terms of domain architecture, JmjC spans 147–315 (FSHTKLEHLV…MQLRIYEIED (169 aa)). Substrate is bound at residue Thr208. Fe cation is bound by residues His211 and Asp213. Lys228 lines the substrate pocket. Fe cation is bound at residue His283. Residues 378–403 (DMEEESCEQQPQEEEEEEEDKEEEGD) show a composition bias toward acidic residues. A disordered region spans residues 378 to 476 (DMEEESCEQQ…PTGSPATEVS (99 aa)). Basic and acidic residues predominate over residues 404–413 (GADKTPKPPT). Positions 415–424 (DPTSPTSTPP) are enriched in low complexity. 2 positions are modified to phosphoserine: Ser447 and Ser450. Thr466 is subject to Phosphothreonine. Positions 467–476 (PTGSPATEVS) are enriched in polar residues. Residue Ser470 is modified to Phosphoserine. The CXXC-type zinc-finger motif lies at 579–625 (ARRRRTRCRKCEACLRTECGECHFCKDMKKFGGPGRMKQSCIMRQCI). The Zn(2+) site is built by Cys586, Cys589, Cys592, Cys597, Cys600, Cys603, Cys619, Cys624, Cys635, Cys638, Cys661, Cys664, His669, Cys672, Cys692, and Cys695. Residues 632–698 (TAVCLVCGEA…CWECPKCNHA (67 aa)) form a PHD-type zinc finger. Disordered regions lie at residues 700–816 (KTGK…SLSP) and 828–1005 (QLKP…SASP). The segment covering 722–772 (KEQKMNRDNKEGQEPAKRRSECEEAPRRRSDEHPKKVPADGILRRKSDDVH) has biased composition (basic and acidic residues). A compositionally biased stretch (low complexity) spans 792-816 (SSLQTSPGSSSHLSPRPPLGSSLSP). Residues Lys830 and Lys863 each participate in a glycyl lysine isopeptide (Lys-Gly) (interchain with G-Cter in SUMO2) cross-link. Positions 883–892 (SRSSSPTAGP) are enriched in polar residues. Residues 905 to 914 (KVKMRRKRRL) show a composition bias toward basic residues. The segment covering 915 to 933 (VNKELSKELSKELNHEIQK) has biased composition (basic and acidic residues). The stretch at 916-944 (NKELSKELSKELNHEIQKTESTLAHESQQ) forms a coiled coil. Ser924 bears the Phosphoserine mark. Over residues 934-946 (TESTLAHESQQPI) the composition is skewed to polar residues. Phosphoserine occurs at positions 948 and 952. Residues 955–968 (DEPKRPLSHCERPH) are compositionally biased toward basic and acidic residues. 2 positions are modified to phosphoserine: Ser991 and Ser1004. An F-box domain is found at 1032 to 1078 (DGAAHVMHREVWMAVFSYLSHRDLCVCMRVCRTWNRWCCDKRLWTRI). LRR repeat units follow at residues 1106 to 1127 (WTNISKKQLSWLINRLPGLRDL), 1129 to 1155 (LSGCSWIAVSALCSSSCPLLRTLDVQW), 1195 to 1220 (GLDITDVSLRLIIRHMPLLSKLQLSY), 1221 to 1250 (CNHINDQSINLLTAVGTTTRDSLTEVNLSD), 1251 to 1275 (CNKVTDLCLSFFKRCGNICHIDLRY), and 1276 to 1309 (CKQVTKEGCEQFIAEMSVSVQFGQVEEKLLQKLS).

This sequence belongs to the JHDM1 histone demethylase family. In terms of assembly, interacts with SKP1, forming heterodimers. The KDM2B-SKP1 heterodimeric complex interacts with the PCGF1-BCORL heterodimeric complex to form a homotetrameric polycomb repression complex 1 (PRC1.1). Directly interacts with CUL1. The SKP1-KDM2B interacts with UBB. Requires Fe(2+) as cofactor.

It localises to the nucleus. The protein resides in the nucleolus. Its subcellular location is the chromosome. It catalyses the reaction N(6),N(6)-dimethyl-L-lysyl(36)-[histone H3] + 2 2-oxoglutarate + 2 O2 = L-lysyl(36)-[histone H3] + 2 formaldehyde + 2 succinate + 2 CO2. With respect to regulation, histone demethylase activity is inhibited by fumarate. In terms of biological role, histone demethylase that demethylates 'Lys-4' and 'Lys-36' of histone H3, thereby playing a central role in histone code. Preferentially demethylates trimethylated H3 'Lys-4' and dimethylated H3 'Lys-36' residue while it has weak or no activity for mono- and tri-methylated H3 'Lys-36'. Preferentially binds the transcribed region of ribosomal RNA and represses the transcription of ribosomal RNA genes which inhibits cell growth and proliferation. May also serve as a substrate-recognition component of the SCF (SKP1-CUL1-F-box protein)-type E3 ubiquitin ligase complex. The polypeptide is Lysine-specific demethylase 2B (Kdm2b) (Mus musculus (Mouse)).